The following is an 837-amino-acid chain: Thioredoxin domain-containing protein 3 homolog (837 aa).

The 110-residue stretch at 6–115 (EQIQLQKEIL…LKNVERELKQ (110 aa)) folds into the Thioredoxin domain. A disulfide bond links cysteine 39 and cysteine 42. NDK regions lie at residues 201 to 345 (KEVT…SVPI), 355 to 491 (IEKT…FPKQ), and 493 to 629 (TLAV…EVLP). Residues 633–837 (VKDSVASISM…EEKTEEQTAS (205 aa)) are disordered. The segment covering 638-647 (ASISMEQSQV) has biased composition (polar residues). Over residues 652–670 (EEGGEEQTEQPAGEGEEQQ) the composition is skewed to acidic residues. Low complexity-rich tracts occupy residues 671-707 (AEQPAAESGEQQAEGGEPATETATEGGEQQAEQPPAE), 718-752 (QQTQEGETPAADEAQAEQTQEGETPAADEAQAEQT), and 766-787 (APATEETAAEQAPAAEETQQTQ). The segment covering 805–819 (AGGGEEAVATEGGGE) has biased composition (gly residues). Residues 820 to 837 (GDAKPEGGEEKTEEQTAS) are compositionally biased toward basic and acidic residues.

It in the C-terminal section; belongs to the NDK family. As to quaternary structure, monomer. In terms of tissue distribution, testis-specific. In sperm, it is a component of the arm dynein of sperm axoneme.

Probably required during the final stages of sperm tail maturation in the testis and/or epididymis, where extensive disulfide bonding of fibrous sheath (FS) proteins occurs. In vitro, it has neither nucleoside diphosphate kinase (NDPK) activity nor reducing activity on disulfide bonds. Exhibits a 3'-5' exonuclease activity with a preference for single-stranded DNA, suggesting roles in DNA proofreading and repair. In Heliocidaris crassispina (Sea urchin), this protein is Thioredoxin domain-containing protein 3 homolog (NME8).